The chain runs to 459 residues: Bifunctional protein GlmU (459 aa).

The interval 1–229 (MSNYAIILAA…FDESLGVNDR (229 aa)) is pyrophosphorylase. UDP-N-acetyl-alpha-D-glucosamine-binding positions include 8-11 (LAAG), Lys22, Gln72, and 77-78 (GT). Position 102 (Asp102) interacts with Mg(2+). UDP-N-acetyl-alpha-D-glucosamine-binding residues include Gly139, Glu154, Asn169, and Asn227. Asn227 provides a ligand contact to Mg(2+). Positions 230–250 (VALATAEKVMRHRIARQHMVN) are linker. Positions 251–459 (GVTVVNPDSA…NKKPHHPSQK (209 aa)) are N-acetyltransferase. UDP-N-acetyl-alpha-D-glucosamine is bound by residues Arg332 and Lys350. The active-site Proton acceptor is His362. UDP-N-acetyl-alpha-D-glucosamine contacts are provided by Tyr365 and Asn376. Acetyl-CoA contacts are provided by residues Ala379, 385–386 (NY), Ser404, Ala422, and Arg439.

It in the N-terminal section; belongs to the N-acetylglucosamine-1-phosphate uridyltransferase family. This sequence in the C-terminal section; belongs to the transferase hexapeptide repeat family. In terms of assembly, homotrimer. Mg(2+) is required as a cofactor.

The protein localises to the cytoplasm. It carries out the reaction alpha-D-glucosamine 1-phosphate + acetyl-CoA = N-acetyl-alpha-D-glucosamine 1-phosphate + CoA + H(+). The catalysed reaction is N-acetyl-alpha-D-glucosamine 1-phosphate + UTP + H(+) = UDP-N-acetyl-alpha-D-glucosamine + diphosphate. It functions in the pathway nucleotide-sugar biosynthesis; UDP-N-acetyl-alpha-D-glucosamine biosynthesis; N-acetyl-alpha-D-glucosamine 1-phosphate from alpha-D-glucosamine 6-phosphate (route II): step 2/2. The protein operates within nucleotide-sugar biosynthesis; UDP-N-acetyl-alpha-D-glucosamine biosynthesis; UDP-N-acetyl-alpha-D-glucosamine from N-acetyl-alpha-D-glucosamine 1-phosphate: step 1/1. Its pathway is bacterial outer membrane biogenesis; LPS lipid A biosynthesis. Its function is as follows. Catalyzes the last two sequential reactions in the de novo biosynthetic pathway for UDP-N-acetylglucosamine (UDP-GlcNAc). The C-terminal domain catalyzes the transfer of acetyl group from acetyl coenzyme A to glucosamine-1-phosphate (GlcN-1-P) to produce N-acetylglucosamine-1-phosphate (GlcNAc-1-P), which is converted into UDP-GlcNAc by the transfer of uridine 5-monophosphate (from uridine 5-triphosphate), a reaction catalyzed by the N-terminal domain. The protein is Bifunctional protein GlmU of Streptococcus agalactiae serotype V (strain ATCC BAA-611 / 2603 V/R).